The chain runs to 100 residues: High mobility group protein C (100 aa).

Residues 12-80 constitute a DNA-binding region (HMG box); that stretch reads PKRPLSAFFL…KYEKDMQAYE (69 aa). The segment at 81 to 100 is disordered; sequence KKYGKPEKQKKIKKNKKGSK. The span at 90–100 shows a compositional bias: basic residues; that stretch reads KKIKKNKKGSK.

Its subcellular location is the nucleus. The protein resides in the chromosome. This Tetrahymena thermophila protein is High mobility group protein C.